The sequence spans 89 residues: Large ribosomal subunit protein L37-2 (89 aa).

Positions 19, 22, 34, and 37 each coordinate Zn(2+). The C4-type zinc-finger motif lies at 19-37; it reads CRRCGNSSYHLQKSKCSQC.

Belongs to the eukaryotic ribosomal protein eL37 family. It depends on Zn(2+) as a cofactor.

Its function is as follows. Binds to the 23S rRNA. The sequence is that of Large ribosomal subunit protein L37-2 from Drosophila melanogaster (Fruit fly).